The sequence spans 555 residues: Transcription factor kojR (555 aa).

Residues 21-47 (CETCKLRKRKCDGHEPCTYCLRYEYQC) constitute a DNA-binding region (zn(2)-C6 fungal-type). Residues 51 to 73 (PHPRRKPAASKSSARPSEEEDSP) form a disordered region.

It localises to the nucleus. In terms of biological role, transcription factor that regulates the gene cluster that mediates the biosynthesis of 5-hydroxy-2-hydroxymethyl-1,4-pyrone, also know as kojic acid, a by-product in the fermentation process of malting rice that acts as a chelation agent. Mediates the expression of kojA and kojT via binding of an 11-nucleotide palindromic sequence, 5'-CGRCTWAGYCG-3' (R=A/G, W=A/T, Y=C/T) within the target gene promoters. The chain is Transcription factor kojR from Aspergillus flavus (strain ATCC 200026 / FGSC A1120 / IAM 13836 / NRRL 3357 / JCM 12722 / SRRC 167).